A 401-amino-acid polypeptide reads, in one-letter code: Acetate kinase (401 aa).

Asn10 lines the Mg(2+) pocket. Lys17 serves as a coordination point for ATP. Arg91 lines the substrate pocket. Asp150 acts as the Proton donor/acceptor in catalysis. ATP contacts are provided by residues His210–Gly214, Asp285–Arg287, and Gly333–Asn337. Glu387 is a binding site for Mg(2+).

Belongs to the acetokinase family. Homodimer. The cofactor is Mg(2+). Requires Mn(2+) as cofactor.

It is found in the cytoplasm. It catalyses the reaction acetate + ATP = acetyl phosphate + ADP. It functions in the pathway metabolic intermediate biosynthesis; acetyl-CoA biosynthesis; acetyl-CoA from acetate: step 1/2. Catalyzes the formation of acetyl phosphate from acetate and ATP. Can also catalyze the reverse reaction. The polypeptide is Acetate kinase (Pasteurella multocida (strain Pm70)).